The following is a 158-amino-acid chain: NAD(P)H-quinone oxidoreductase subunit N (158 aa).

Belongs to the complex I NdhN subunit family. As to quaternary structure, NDH-1 can be composed of about 15 different subunits; different subcomplexes with different compositions have been identified which probably have different functions.

The protein localises to the cellular thylakoid membrane. The enzyme catalyses a plastoquinone + NADH + (n+1) H(+)(in) = a plastoquinol + NAD(+) + n H(+)(out). The catalysed reaction is a plastoquinone + NADPH + (n+1) H(+)(in) = a plastoquinol + NADP(+) + n H(+)(out). Functionally, NDH-1 shuttles electrons from an unknown electron donor, via FMN and iron-sulfur (Fe-S) centers, to quinones in the respiratory and/or the photosynthetic chain. The immediate electron acceptor for the enzyme in this species is believed to be plastoquinone. Couples the redox reaction to proton translocation, and thus conserves the redox energy in a proton gradient. Cyanobacterial NDH-1 also plays a role in inorganic carbon-concentration. This chain is NAD(P)H-quinone oxidoreductase subunit N, found in Synechococcus elongatus (strain ATCC 33912 / PCC 7942 / FACHB-805) (Anacystis nidulans R2).